Here is a 316-residue protein sequence, read N- to C-terminus: Transaldolase (316 aa).

K131 functions as the Schiff-base intermediate with substrate in the catalytic mechanism.

It belongs to the transaldolase family. Type 1 subfamily. Homodimer.

It localises to the cytoplasm. It catalyses the reaction D-sedoheptulose 7-phosphate + D-glyceraldehyde 3-phosphate = D-erythrose 4-phosphate + beta-D-fructose 6-phosphate. Its pathway is carbohydrate degradation; pentose phosphate pathway; D-glyceraldehyde 3-phosphate and beta-D-fructose 6-phosphate from D-ribose 5-phosphate and D-xylulose 5-phosphate (non-oxidative stage): step 2/3. In terms of biological role, transaldolase is important for the balance of metabolites in the pentose-phosphate pathway. The protein is Transaldolase of Glaesserella parasuis serovar 5 (strain SH0165) (Haemophilus parasuis).